The sequence spans 858 residues: Respiratory burst oxidase homolog protein D (858 aa).

Over residues 1-13 (MQNPEDHHSDREL) the composition is skewed to basic and acidic residues. Residues 1–27 (MQNPEDHHSDRELSSPSNTTKSNDDKN) are disordered. Residues 1-318 (MQNPEDHHSD…KYFLLDNWRR (318 aa)) are Cytoplasmic-facing. 2 EF-hand-like regions span residues 134–144 (TATSDSLLPRA) and 171–182 (RNITSGCISKEQ). EF-hand domains are found at residues 194–229 (SFDS…SASA) and 238–273 (QAAE…APIQ). Residues aspartate 207, aspartate 209, aspartate 211, arginine 213, and glutamate 218 each coordinate Ca(2+). A helical transmembrane segment spans residues 319–339 (VWVLLLWIGVMAGLFAYKYVQ). The Extracellular portion of the chain corresponds to 340-351 (YKNKAAFNVMGH). Residues 352–372 (CVCVAKGAAEVLKLNMALILL) traverse the membrane as a helical segment. In terms of domain architecture, Ferric oxidoreductase spans 357 to 514 (KGAAEVLKLN…LFVIVYSLLI (158 aa)). The Cytoplasmic segment spans residues 373 to 397 (PVCRNTITWLRNKTKLGGAVPFDDN). A helical membrane pass occupies residues 398-418 (INFHKVVAGAIAVGVGIHVLA). The Extracellular portion of the chain corresponds to 419 to 454 (HMTCDFPRLLNASPEKYKPMEPYFGDQPRNYWHFVK). The helical transmembrane segment at 455–475 (GVEGVSGIIMVVLMSIAFTLA) threads the bilayer. Residues 476-497 (SQRFRRNKIRLPRPLNKLTGFN) lie on the Cytoplasmic side of the membrane. Residues 498–518 (AFWYSHHLFVIVYSLLIVHGI) traverse the membrane as a helical segment. Over 519 to 675 (ELYLTKEWYK…APAQDYKEYE (157 aa)) the chain is Extracellular. The FAD-binding FR-type domain occupies 548 to 670 (LRAFRSSVKD…DGPYGAPAQD (123 aa)). The helical transmembrane segment at 676–696 (VLLLVGLGIGATPMISIVKDI) threads the bilayer. The Cytoplasmic portion of the chain corresponds to 697-858 (VNNMKEEKYD…TKFDFHKENF (162 aa)).

The protein belongs to the RBOH (TC 5.B.1.3) family. In terms of assembly, monomer and homodimer. In terms of processing, phosphorylated by CPK. In terms of tissue distribution, expressed in leaves.

The protein localises to the membrane. Its function is as follows. Calcium-dependent NADPH oxidase that generates superoxide. May be responsible for the oxidative burst in response to pathogen attack in the leaves. The sequence is that of Respiratory burst oxidase homolog protein D (RBOHD) from Solanum tuberosum (Potato).